The sequence spans 284 residues: 2-dehydro-3-deoxyphosphooctonate aldolase (284 aa).

Belongs to the KdsA family.

The protein localises to the cytoplasm. It catalyses the reaction D-arabinose 5-phosphate + phosphoenolpyruvate + H2O = 3-deoxy-alpha-D-manno-2-octulosonate-8-phosphate + phosphate. It functions in the pathway carbohydrate biosynthesis; 3-deoxy-D-manno-octulosonate biosynthesis; 3-deoxy-D-manno-octulosonate from D-ribulose 5-phosphate: step 2/3. Its pathway is bacterial outer membrane biogenesis; lipopolysaccharide biosynthesis. The protein is 2-dehydro-3-deoxyphosphooctonate aldolase of Pseudoalteromonas translucida (strain TAC 125).